Reading from the N-terminus, the 1399-residue chain is DNA-directed RNA polymerase subunit beta' (1399 aa).

4 residues coordinate Zn(2+): Cys70, Cys72, Cys85, and Cys88. Mg(2+) contacts are provided by Asp460, Asp462, and Asp464. Residues Cys814, Cys888, Cys895, and Cys898 each coordinate Zn(2+).

This sequence belongs to the RNA polymerase beta' chain family. The RNAP catalytic core consists of 2 alpha, 1 beta, 1 beta' and 1 omega subunit. When a sigma factor is associated with the core the holoenzyme is formed, which can initiate transcription. It depends on Mg(2+) as a cofactor. Zn(2+) serves as cofactor.

It carries out the reaction RNA(n) + a ribonucleoside 5'-triphosphate = RNA(n+1) + diphosphate. In terms of biological role, DNA-dependent RNA polymerase catalyzes the transcription of DNA into RNA using the four ribonucleoside triphosphates as substrates. The protein is DNA-directed RNA polymerase subunit beta' of Pseudomonas putida (strain W619).